We begin with the raw amino-acid sequence, 248 residues long: Probable transcriptional regulatory protein Nwi_2729 (248 aa).

The segment at 1–21 (MAGHSQFKNIMHRKGRQDAQK) is disordered.

Belongs to the TACO1 family.

The protein resides in the cytoplasm. The polypeptide is Probable transcriptional regulatory protein Nwi_2729 (Nitrobacter winogradskyi (strain ATCC 25391 / DSM 10237 / CIP 104748 / NCIMB 11846 / Nb-255)).